Reading from the N-terminus, the 362-residue chain is Biotin synthase (362 aa).

The 236-residue stretch at 70–305 (CCGNVVDLCS…QQIIRYAGGR (236 aa)) folds into the Radical SAM core domain. [4Fe-4S] cluster-binding residues include C88, C92, and C95. [2Fe-2S] cluster-binding residues include C133, C170, C230, and R300.

This sequence belongs to the radical SAM superfamily. Biotin synthase family. As to quaternary structure, homodimer. The cofactor is [4Fe-4S] cluster. Requires [2Fe-2S] cluster as cofactor.

The enzyme catalyses (4R,5S)-dethiobiotin + (sulfur carrier)-SH + 2 reduced [2Fe-2S]-[ferredoxin] + 2 S-adenosyl-L-methionine = (sulfur carrier)-H + biotin + 2 5'-deoxyadenosine + 2 L-methionine + 2 oxidized [2Fe-2S]-[ferredoxin]. It functions in the pathway cofactor biosynthesis; biotin biosynthesis; biotin from 7,8-diaminononanoate: step 2/2. Catalyzes the conversion of dethiobiotin (DTB) to biotin by the insertion of a sulfur atom into dethiobiotin via a radical-based mechanism. The protein is Biotin synthase of Synechocystis sp. (strain ATCC 27184 / PCC 6803 / Kazusa).